Here is an 82-residue protein sequence, read N- to C-terminus: uncharacterized protein (82 aa).

Residues 22–82 are disordered; the sequence is LRRSRSSRNG…WPPPCAFTPG (61 aa). Residues 47–58 are compositionally biased toward basic and acidic residues; the sequence is HRGEPGHPRMEE. The span at 73-82 shows a compositional bias: pro residues; it reads WPPPCAFTPG.

This is an uncharacterized protein from Homo sapiens (Human).